Here is a 130-residue protein sequence, read N- to C-terminus: Small ribosomal subunit protein uS11c (130 aa).

This sequence belongs to the universal ribosomal protein uS11 family. As to quaternary structure, part of the 30S ribosomal subunit.

It localises to the plastid. It is found in the chloroplast. This chain is Small ribosomal subunit protein uS11c, found in Porphyra purpurea (Red seaweed).